A 389-amino-acid chain; its full sequence is Acetylornithine aminotransferase (389 aa).

Pyridoxal 5'-phosphate is bound by residues 104–105 and phenylalanine 131; that span reads GT. Residue arginine 134 participates in N(2)-acetyl-L-ornithine binding. 216 to 219 serves as a coordination point for pyridoxal 5'-phosphate; the sequence is DEVQ. Residue lysine 245 is modified to N6-(pyridoxal phosphate)lysine. Serine 273 contacts N(2)-acetyl-L-ornithine. Threonine 274 is a pyridoxal 5'-phosphate binding site.

It belongs to the class-III pyridoxal-phosphate-dependent aminotransferase family. ArgD subfamily. Homodimer. It depends on pyridoxal 5'-phosphate as a cofactor.

The protein localises to the cytoplasm. The enzyme catalyses N(2)-acetyl-L-ornithine + 2-oxoglutarate = N-acetyl-L-glutamate 5-semialdehyde + L-glutamate. The protein operates within amino-acid biosynthesis; L-arginine biosynthesis; N(2)-acetyl-L-ornithine from L-glutamate: step 4/4. In Methanopyrus kandleri (strain AV19 / DSM 6324 / JCM 9639 / NBRC 100938), this protein is Acetylornithine aminotransferase.